The chain runs to 485 residues: Glycogen synthase (485 aa).

Residue Lys20 participates in ADP-alpha-D-glucose binding.

This sequence belongs to the glycosyltransferase 1 family. Bacterial/plant glycogen synthase subfamily.

It carries out the reaction [(1-&gt;4)-alpha-D-glucosyl](n) + ADP-alpha-D-glucose = [(1-&gt;4)-alpha-D-glucosyl](n+1) + ADP + H(+). It functions in the pathway glycan biosynthesis; glycogen biosynthesis. In terms of biological role, synthesizes alpha-1,4-glucan chains using ADP-glucose. This Vibrio vulnificus (strain YJ016) protein is Glycogen synthase.